Consider the following 161-residue polypeptide: Transcription elongation factor GreA (161 aa).

Residues 8-28 (LTQEGFKQLEKELENLIQVKR) are a coiled coil.

It belongs to the GreA/GreB family.

In terms of biological role, necessary for efficient RNA polymerase transcription elongation past template-encoded arresting sites. The arresting sites in DNA have the property of trapping a certain fraction of elongating RNA polymerases that pass through, resulting in locked ternary complexes. Cleavage of the nascent transcript by cleavage factors such as GreA or GreB allows the resumption of elongation from the new 3'terminus. GreA releases sequences of 2 to 3 nucleotides. This chain is Transcription elongation factor GreA, found in Mycoplasma genitalium (strain ATCC 33530 / DSM 19775 / NCTC 10195 / G37) (Mycoplasmoides genitalium).